The chain runs to 446 residues: Phosphoglucosamine mutase (446 aa).

Catalysis depends on Ser101, which acts as the Phosphoserine intermediate. Residues Ser101, Asp240, Asp242, and Asp244 each contribute to the Mg(2+) site. Position 101 is a phosphoserine (Ser101).

The protein belongs to the phosphohexose mutase family. It depends on Mg(2+) as a cofactor. In terms of processing, activated by phosphorylation.

The enzyme catalyses alpha-D-glucosamine 1-phosphate = D-glucosamine 6-phosphate. Functionally, catalyzes the conversion of glucosamine-6-phosphate to glucosamine-1-phosphate. The sequence is that of Phosphoglucosamine mutase from Pseudomonas entomophila (strain L48).